Reading from the N-terminus, the 317-residue chain is Methionyl-tRNA formyltransferase (317 aa).

112-115 (SLLP) provides a ligand contact to (6S)-5,6,7,8-tetrahydrofolate.

Belongs to the Fmt family.

It catalyses the reaction L-methionyl-tRNA(fMet) + (6R)-10-formyltetrahydrofolate = N-formyl-L-methionyl-tRNA(fMet) + (6S)-5,6,7,8-tetrahydrofolate + H(+). Attaches a formyl group to the free amino group of methionyl-tRNA(fMet). The formyl group appears to play a dual role in the initiator identity of N-formylmethionyl-tRNA by promoting its recognition by IF2 and preventing the misappropriation of this tRNA by the elongation apparatus. This Histophilus somni (strain 2336) (Haemophilus somnus) protein is Methionyl-tRNA formyltransferase.